A 1838-amino-acid polypeptide reads, in one-letter code: Nuclear pore complex protein NUP205 (1838 aa).

This sequence belongs to the NUP186/NUP192/NUP205 family. As to quaternary structure, part of the nuclear pore complex (NPC). The NPC has an eight-fold symmetrical structure comprising a central transport channel and two rings, the cytoplasmic and nuclear rings, to which eight filaments are attached. The cytoplasmic filaments have loose ends, while the nuclear filaments are joined in a distal ring, forming a nuclear basket. NPCs are highly dynamic in configuration and composition, and can be devided in 3 subcomplexes, the NUP62 subcomplex, the NUP107-160 subcomplex and the NUP93 subcomplex, containing approximately 30 different nucleoporin proteins.

Its subcellular location is the nucleus envelope. The protein localises to the nucleus. It localises to the nuclear pore complex. This Arabidopsis thaliana (Mouse-ear cress) protein is Nuclear pore complex protein NUP205.